Reading from the N-terminus, the 2104-residue chain is Myosin type-2 heavy chain 2 (2104 aa).

In terms of domain architecture, Myosin N-terminal SH3-like spans 35–85; sequence DERTWIWIPDSKESFVKAWIVEDLGEKYRVKLERDGSERIVDGFDAEKVNP. Positions 89–767 constitute a Myosin motor domain; it reads DMVDDMAALT…VLGSLEDRRN (679 aa). 182 to 189 contributes to the ATP binding site; the sequence is GESGAGKT. Residues 646–660 are actin-binding; the sequence is LSSLMHQLEATQPHF. Residues 829-2104 adopt a coiled-coil conformation; the sequence is LGTTQTDEYL…RSNRSPSVLR (1276 aa). Disordered stretches follow at residues 1245-1278 and 1398-1426; these read NRSVTQHTLDGNSPHPSFEEKHSGDPLKRIDGNN and MEFTGLKPLSPSKISNLPSSQPGSPSKRS. Residues 1246–1259 show a composition bias toward polar residues; it reads RSVTQHTLDGNSPH. Residues 1261-1278 are compositionally biased toward basic and acidic residues; sequence SFEEKHSGDPLKRIDGNN. Residues 1409–1424 show a composition bias toward polar residues; the sequence is SKISNLPSSQPGSPSK. S1421 is subject to Phosphoserine.

This sequence belongs to the TRAFAC class myosin-kinesin ATPase superfamily. Myosin family. As to quaternary structure, binds to cdc4 and rlc1.

In terms of biological role, stabilizes the F-actin cables forming the F-actin ring that surrounds the nucleus during interphase. May work in conjunction with myo2. In Schizosaccharomyces pombe (strain 972 / ATCC 24843) (Fission yeast), this protein is Myosin type-2 heavy chain 2 (myo3).